We begin with the raw amino-acid sequence, 199 residues long: Pneumococcal vaccine antigen A homolog (199 aa).

The protein localises to the cell surface. This Streptococcus pyogenes serotype M6 (strain ATCC BAA-946 / MGAS10394) protein is Pneumococcal vaccine antigen A homolog (pvaA).